Here is a 291-residue protein sequence, read N- to C-terminus: ATP synthase gamma chain (291 aa).

This sequence belongs to the ATPase gamma chain family. F-type ATPases have 2 components, CF(1) - the catalytic core - and CF(0) - the membrane proton channel. CF(1) has five subunits: alpha(3), beta(3), gamma(1), delta(1), epsilon(1). CF(0) has three main subunits: a, b and c.

The protein localises to the cell inner membrane. Functionally, produces ATP from ADP in the presence of a proton gradient across the membrane. The gamma chain is believed to be important in regulating ATPase activity and the flow of protons through the CF(0) complex. This Pelodictyon phaeoclathratiforme (strain DSM 5477 / BU-1) protein is ATP synthase gamma chain.